The primary structure comprises 144 residues: Probable DNA-directed RNA polymerases I and III subunit RPAC2 (144 aa).

The disordered stretch occupies residues 14–47 (KVEAETMEVDEQPQETPQVDDEEDLNVPSKKKME). Residues 18–38 (ETMEVDEQPQETPQVDDEEDL) show a composition bias toward acidic residues.

It belongs to the archaeal Rpo11/eukaryotic RPB11/RPC19 RNA polymerase subunit family. Component of the RNA polymerase I (Pol I) and RNA polymerase III (Pol III) complexes consisting of at least 13 and 17 subunits, respectively.

The protein localises to the nucleus. DNA-dependent RNA polymerase catalyzes the transcription of DNA into RNA using the four ribonucleoside triphosphates as substrates. Common core component of RNA polymerases I and III which synthesize ribosomal RNA precursors and small RNAs, such as 5S rRNA and tRNAs, respectively. The chain is Probable DNA-directed RNA polymerases I and III subunit RPAC2 (rpac-19) from Caenorhabditis elegans.